A 416-amino-acid chain; its full sequence is Serine hydroxymethyltransferase (416 aa).

(6S)-5,6,7,8-tetrahydrofolate-binding positions include Leu-121 and 125–127 (GHL). Lys-230 is modified (N6-(pyridoxal phosphate)lysine). Position 355–357 (355–357 (SPF)) interacts with (6S)-5,6,7,8-tetrahydrofolate.

This sequence belongs to the SHMT family. In terms of assembly, homodimer. Pyridoxal 5'-phosphate serves as cofactor.

It is found in the cytoplasm. The catalysed reaction is (6R)-5,10-methylene-5,6,7,8-tetrahydrofolate + glycine + H2O = (6S)-5,6,7,8-tetrahydrofolate + L-serine. The protein operates within one-carbon metabolism; tetrahydrofolate interconversion. Its pathway is amino-acid biosynthesis; glycine biosynthesis; glycine from L-serine: step 1/1. Functionally, catalyzes the reversible interconversion of serine and glycine with tetrahydrofolate (THF) serving as the one-carbon carrier. This reaction serves as the major source of one-carbon groups required for the biosynthesis of purines, thymidylate, methionine, and other important biomolecules. Also exhibits THF-independent aldolase activity toward beta-hydroxyamino acids, producing glycine and aldehydes, via a retro-aldol mechanism. The polypeptide is Serine hydroxymethyltransferase (Streptococcus thermophilus (strain ATCC BAA-250 / LMG 18311)).